The sequence spans 1381 residues: Hepatocyte growth factor receptor (1381 aa).

A signal peptide spans 1–24 (MKAPAVLAPGILMLLFTLVQRSNG). Residues 25 to 932 (ECKEALAKSE…VIVQPDQNFT (908 aa)) are Extracellular-facing. A Sema domain is found at 27–515 (KEALAKSEMN…TGKKITKIPL (489 aa)). A glycan (N-linked (GlcNAc...) asparagine) is linked at asparagine 45. 4 disulfides stabilise this stretch: cysteine 95/cysteine 101, cysteine 98/cysteine 160, cysteine 133/cysteine 141, and cysteine 172/cysteine 175. Asparagine 106 carries N-linked (GlcNAc...) asparagine glycosylation. Asparagine 149 is a glycosylation site (N-linked (GlcNAc...) asparagine). N-linked (GlcNAc...) asparagine glycosylation is present at asparagine 202. 2 disulfides stabilise this stretch: cysteine 298–cysteine 363 and cysteine 385–cysteine 397. Asparagine 399 and asparagine 405 each carry an N-linked (GlcNAc...) asparagine glycan. 4 cysteine pairs are disulfide-bonded: cysteine 520/cysteine 538, cysteine 526/cysteine 561, cysteine 529/cysteine 545, and cysteine 541/cysteine 551. IPT/TIG domains lie at 563–655 (PAIY…FSYV), 657–739 (PIIT…FSYR), and 742–836 (PIVY…LIYV). Threonine 582 carries an O-linked (Man) threonine glycan. Residues asparagine 607 and asparagine 635 are each glycosylated (N-linked (GlcNAc...) asparagine). Threonine 676 and threonine 761 each carry an O-linked (Man) threonine glycan. N-linked (GlcNAc...) asparagine glycans are attached at residues asparagine 785, asparagine 879, and asparagine 930. The chain crosses the membrane as a helical span at residues 933-955 (GLIAGVVSISIALLLLLGLFLWL). Over 956–1381 (KKRKQIKDLG…EDNADDEVDT (426 aa)) the chain is Cytoplasmic. Serine 966 carries the phosphoserine modification. Position 977 is a phosphothreonine (threonine 977). Phosphoserine occurs at positions 990, 997, and 1000. At tyrosine 1003 the chain carries Phosphotyrosine. A Protein kinase domain is found at 1078 to 1345 (VHFNEVIGRG…RISAIFSTFI (268 aa)). ATP contacts are provided by residues 1084 to 1092 (IGRGHFGCV) and lysine 1110. The active-site Proton acceptor is the aspartate 1204. Positions 1212–1381 (LDEKFTVKVA…EDNADDEVDT (170 aa)) are interaction with RANBP9. Phosphotyrosine is present on tyrosine 1230. A phosphotyrosine; by autocatalysis mark is found at tyrosine 1234 and tyrosine 1235. Phosphothreonine is present on threonine 1289. The interval 1320–1359 (WHPKAEMRPSFSELVSRISAIFSTFIGEHYVHVNATYVNV) is interaction with MUC20. Phosphotyrosine; by autocatalysis occurs at positions 1349 and 1356. Tyrosine 1365 is subject to Phosphotyrosine.

This sequence belongs to the protein kinase superfamily. Tyr protein kinase family. Heterodimer made of an alpha chain (50 kDa) and a beta chain (145 kDa) which are disulfide linked. Binds PLXNB1. Interacts when phosphorylated with downstream effectors including STAT3, PIK3R1, SRC, PCLG1, GRB2 and GAB1. Interacts with SPSB1, SPSB2 and SPSB4. Interacts with INPP5D/SHIP1. When phosphorylated at Tyr-1356, interacts with INPPL1/SHIP2. Interacts with RANBP9 and RANBP10, as well as SPSB1, SPSB2, SPSB3 and SPSB4. SPSB1 binding occurs in the presence and in the absence of HGF, however HGF treatment has a positive effect on this interaction. Interacts with MUC20; prevents interaction with GRB2 and suppresses hepatocyte growth factor-induced cell proliferation. Interacts with GRB10. Interacts with PTPN1 and PTPN2. Interacts with HSP90AA1 and HSP90AB1; the interaction suppresses MET kinase activity. Interacts with tensin TNS3. Interacts (when phosphorylated) with tensin TNS4 (via SH2 domain); the interaction increases MET protein stability by inhibiting MET endocytosis and subsequent lysosomal degradation. As to quaternary structure, (Microbial infection) Immunoprecipitates with L.monocytogenes InlB. InlB probably dimerizes upon binding to MET, which encourages subsequent dimerization of MET. In terms of processing, autophosphorylated in response to ligand binding on Tyr-1234 and Tyr-1235 in the kinase domain leading to further phosphorylation of Tyr-1349 and Tyr-1356 in the C-terminal multifunctional docking site. Dephosphorylated by PTPRJ at Tyr-1349 and Tyr-1365. Dephosphorylated by PTPN1 and PTPN2. Ubiquitinated. Ubiquitination by CBL regulates the receptor stability and activity through proteasomal degradation. Post-translationally, O-mannosylation of IPT/TIG domains by TMEM260 is required for protein maturation. O-mannosylated residues are composed of single mannose glycans that are not elongated or modified. In terms of processing, (Microbial infection) Tyrosine phosphorylation is stimulated by L.monocytogenes InlB.

It is found in the membrane. The enzyme catalyses L-tyrosyl-[protein] + ATP = O-phospho-L-tyrosyl-[protein] + ADP + H(+). With respect to regulation, in its inactive state, the C-terminal tail interacts with the catalytic domain and inhibits the kinase activity. Upon ligand binding, the C-terminal tail is displaced and becomes phosphorylated, thus increasing the kinase activity. In terms of biological role, receptor tyrosine kinase that transduces signals from the extracellular matrix into the cytoplasm by binding to hepatocyte growth factor/HGF ligand. Regulates many physiological processes including proliferation, scattering, morphogenesis and survival. Ligand binding at the cell surface induces autophosphorylation of MET on its intracellular domain that provides docking sites for downstream signaling molecules. Following activation by ligand, interacts with the PI3-kinase subunit PIK3R1, PLCG1, SRC, GRB2, STAT3 or the adapter GAB1. Recruitment of these downstream effectors by MET leads to the activation of several signaling cascades including the RAS-ERK, PI3 kinase-AKT, or PLCgamma-PKC. The RAS-ERK activation is associated with the morphogenetic effects while PI3K/AKT coordinates prosurvival effects. During embryonic development, MET signaling plays a role in gastrulation, development and migration of muscles and neuronal precursors, angiogenesis and kidney formation. In adults, participates in wound healing as well as organ regeneration and tissue remodeling. Also promotes differentiation and proliferation of hematopoietic cells. (Microbial infection) Acts as a receptor for Listeria monocytogenes internalin InlB, mediating entry of the pathogen into cells. The polypeptide is Hepatocyte growth factor receptor (MET) (Chlorocebus aethiops (Green monkey)).